The primary structure comprises 570 residues: Formate--tetrahydrofolate ligase (570 aa).

Position 65 to 72 (65 to 72 (TPFGEGKT)) interacts with ATP.

The protein belongs to the formate--tetrahydrofolate ligase family.

It catalyses the reaction (6S)-5,6,7,8-tetrahydrofolate + formate + ATP = (6R)-10-formyltetrahydrofolate + ADP + phosphate. It participates in one-carbon metabolism; tetrahydrofolate interconversion. This chain is Formate--tetrahydrofolate ligase, found in Shewanella halifaxensis (strain HAW-EB4).